A 211-amino-acid polypeptide reads, in one-letter code: Dihydrofolate reductase (211 aa).

Residues 7-210 (PIVGIVACLQ…YCFEFTLYNR (204 aa)) form the DHFR domain. Residues Ala13 and 20-26 (GIGFRGG) contribute to the NADP(+) site. 34–39 (EMKYFR) is a binding site for substrate. 58 to 60 (RKT) contacts NADP(+). Arg74 provides a ligand contact to substrate. NADP(+)-binding positions include 80–82 (SRS) and 123–130 (GGGEVYSQ).

This sequence belongs to the dihydrofolate reductase family.

It carries out the reaction (6S)-5,6,7,8-tetrahydrofolate + NADP(+) = 7,8-dihydrofolate + NADPH + H(+). It functions in the pathway cofactor biosynthesis; tetrahydrofolate biosynthesis; 5,6,7,8-tetrahydrofolate from 7,8-dihydrofolate: step 1/1. Functionally, key enzyme in folate metabolism. Catalyzes an essential reaction for de novo glycine and purine synthesis, and for DNA precursor synthesis. This is Dihydrofolate reductase (DFR1) from Saccharomyces cerevisiae (strain ATCC 204508 / S288c) (Baker's yeast).